The chain runs to 608 residues: Dihydroxy-acid dehydratase, chloroplastic (608 aa).

A chloroplast-targeting transit peptide spans 1 to 34; the sequence is MQATIFSPRATLFPCKPLLPSHNVNSRRPSIISC. Ser35 carries the N-acetylserine modification. Cys100 contacts [2Fe-2S] cluster. Position 132 (Asp132) interacts with Mg(2+). Cys173 serves as a coordination point for [2Fe-2S] cluster. Residue Asp174 participates in Mg(2+) binding. Cys245 provides a ligand contact to [2Fe-2S] cluster. Glu497 is a Mg(2+) binding site. Catalysis depends on Ser523, which acts as the Proton acceptor.

This sequence belongs to the IlvD/Edd family. It depends on [2Fe-2S] cluster as a cofactor. Mg(2+) is required as a cofactor.

It is found in the plastid. Its subcellular location is the chloroplast. It carries out the reaction (2R)-2,3-dihydroxy-3-methylbutanoate = 3-methyl-2-oxobutanoate + H2O. The catalysed reaction is (2R,3R)-2,3-dihydroxy-3-methylpentanoate = (S)-3-methyl-2-oxopentanoate + H2O. It functions in the pathway amino-acid biosynthesis; L-isoleucine biosynthesis; L-isoleucine from 2-oxobutanoate: step 3/4. Its pathway is amino-acid biosynthesis; L-valine biosynthesis; L-valine from pyruvate: step 3/4. Is highly competitively inhibited by the fungal sesquiterpenoid aspterric acid, which is effective as a herbicide in spray applications. Functions in the biosynthesis of branched-chain amino acids. Catalyzes the dehydration of (2R,3R)-2,3-dihydroxy-3-methylpentanoate (2,3-dihydroxy-3-methylvalerate) into 2-oxo-3-methylpentanoate (2-oxo-3-methylvalerate) and of (2R)-2,3-dihydroxy-3-methylbutanoate (2,3-dihydroxyisovalerate) into 2-oxo-3-methylbutanoate (2-oxoisovalerate), the penultimate precursor to L-isoleucine and L-valine, respectively. The protein is Dihydroxy-acid dehydratase, chloroplastic of Arabidopsis thaliana (Mouse-ear cress).